The chain runs to 401 residues: Cytochrome P450 BJ-1 (401 aa).

Residue Cys-350 participates in heme binding.

Belongs to the cytochrome P450 family. It depends on heme as a cofactor.

Functionally, cytochromes P450 are a group of heme-thiolate monooxygenases. They oxidize a variety of structurally unrelated compounds, including steroids, fatty acids, and xenobiotics. The polypeptide is Cytochrome P450 BJ-1 (cyp112) (Bradyrhizobium diazoefficiens (strain JCM 10833 / BCRC 13528 / IAM 13628 / NBRC 14792 / USDA 110)).